The following is a 100-amino-acid chain: Urease subunit gamma (100 aa).

The protein belongs to the urease gamma subunit family. In terms of assembly, heterotrimer of UreA (gamma), UreB (beta) and UreC (alpha) subunits. Three heterotrimers associate to form the active enzyme.

The protein resides in the cytoplasm. The catalysed reaction is urea + 2 H2O + H(+) = hydrogencarbonate + 2 NH4(+). Its pathway is nitrogen metabolism; urea degradation; CO(2) and NH(3) from urea (urease route): step 1/1. This Magnetococcus marinus (strain ATCC BAA-1437 / JCM 17883 / MC-1) protein is Urease subunit gamma.